A 172-amino-acid chain; its full sequence is L-methionine sulfoximine/L-methionine sulfone acetyltransferase (172 aa).

The N-acetyltransferase domain occupies 3-166 (ASIRDAGVAD…DLTFMQLNLD (164 aa)). Residues 75–77 (RPF) and 85–87 (EHS) each bind substrate. Residues 88–90 (VYV), 96–101 (GKGLGV), and Asn127 contribute to the acetyl-CoA site.

Homodimer.

The enzyme catalyses L-methionine sulfoximine + acetyl-CoA = N-acetyl-L-methionine sulfoximine + CoA + H(+). The catalysed reaction is L-methionine sulfone + acetyl-CoA = N-acetyl-L-methionine sulfone + CoA + H(+). Plays a role in the resistance against the toxic effects of L-methionine sulfoximine (MSX), a rare amino acid, which inhibits glutamine synthetase (GlnA). Catalyzes the acetylation of L-methionine sulfoximine (MSX). In Pseudomonas aeruginosa (strain ATCC 15692 / DSM 22644 / CIP 104116 / JCM 14847 / LMG 12228 / 1C / PRS 101 / PAO1), this protein is L-methionine sulfoximine/L-methionine sulfone acetyltransferase.